A 328-amino-acid chain; its full sequence is Arabinose 5-phosphate isomerase KdsD (328 aa).

Positions 41–184 (ACEKMFNCTG…AVALLKARGF (144 aa)) constitute an SIS domain. Residues 75-76 (GT), H82, H88, 114-123 (ALIPVLKRLH), and 148-150 (KVP) contribute to the substrate site. H82 contacts Zn(2+). Positions 210–268 (MHTGDEIPHVNKHATLRDALLEITRKNLGMTVICDESMKIDGIFTDGDLRRVFDMGGDM) constitute a CBS 1 domain. E275 provides a ligand contact to substrate. The CBS 2 domain occupies 277–328 (MTPGGIRVRPGILAVDALNLMQSRHITSVLVADGDQLLGVLHMHDLLRAGVV).

The protein belongs to the SIS family. GutQ/KpsF subfamily. As to quaternary structure, homotetramer.

It carries out the reaction D-arabinose 5-phosphate = D-ribulose 5-phosphate. It participates in carbohydrate biosynthesis; 3-deoxy-D-manno-octulosonate biosynthesis; 3-deoxy-D-manno-octulosonate from D-ribulose 5-phosphate: step 1/3. The protein operates within bacterial outer membrane biogenesis; lipopolysaccharide biosynthesis. In terms of biological role, involved in the biosynthesis of 3-deoxy-D-manno-octulosonate (KDO), a unique 8-carbon sugar component of lipopolysaccharides (LPSs). Catalyzes the reversible aldol-ketol isomerization between D-ribulose 5-phosphate (Ru5P) and D-arabinose 5-phosphate (A5P). The chain is Arabinose 5-phosphate isomerase KdsD (kdsD) from Salmonella typhimurium (strain LT2 / SGSC1412 / ATCC 700720).